A 1407-amino-acid polypeptide reads, in one-letter code: DNA-directed RNA polymerase subunit beta' (1407 aa).

Residues cysteine 70, cysteine 72, cysteine 85, and cysteine 88 each contribute to the Zn(2+) site. Residues aspartate 460, aspartate 462, and aspartate 464 each coordinate Mg(2+). Zn(2+)-binding residues include cysteine 814, cysteine 888, cysteine 895, and cysteine 898.

Belongs to the RNA polymerase beta' chain family. As to quaternary structure, the RNAP catalytic core consists of 2 alpha, 1 beta, 1 beta' and 1 omega subunit. When a sigma factor is associated with the core the holoenzyme is formed, which can initiate transcription. The cofactor is Mg(2+). Zn(2+) is required as a cofactor.

The catalysed reaction is RNA(n) + a ribonucleoside 5'-triphosphate = RNA(n+1) + diphosphate. In terms of biological role, DNA-dependent RNA polymerase catalyzes the transcription of DNA into RNA using the four ribonucleoside triphosphates as substrates. The chain is DNA-directed RNA polymerase subunit beta' from Buchnera aphidicola subsp. Acyrthosiphon pisum (strain APS) (Acyrthosiphon pisum symbiotic bacterium).